Reading from the N-terminus, the 339-residue chain is Large ribosomal subunit protein uL11m (339 aa).

It belongs to the universal ribosomal protein uL11 family.

Its subcellular location is the mitochondrion. In Acanthamoeba castellanii (Amoeba), this protein is Large ribosomal subunit protein uL11m (RPL11).